The following is a 412-amino-acid chain: Serine hydroxymethyltransferase (412 aa).

Residues L120 and 124-126 each bind (6S)-5,6,7,8-tetrahydrofolate; that span reads GHL. An N6-(pyridoxal phosphate)lysine modification is found at K228. 353–355 contacts (6S)-5,6,7,8-tetrahydrofolate; it reads SPF.

This sequence belongs to the SHMT family. Homodimer. The cofactor is pyridoxal 5'-phosphate.

The protein localises to the cytoplasm. It catalyses the reaction (6R)-5,10-methylene-5,6,7,8-tetrahydrofolate + glycine + H2O = (6S)-5,6,7,8-tetrahydrofolate + L-serine. Its pathway is one-carbon metabolism; tetrahydrofolate interconversion. The protein operates within amino-acid biosynthesis; glycine biosynthesis; glycine from L-serine: step 1/1. Its function is as follows. Catalyzes the reversible interconversion of serine and glycine with tetrahydrofolate (THF) serving as the one-carbon carrier. This reaction serves as the major source of one-carbon groups required for the biosynthesis of purines, thymidylate, methionine, and other important biomolecules. Also exhibits THF-independent aldolase activity toward beta-hydroxyamino acids, producing glycine and aldehydes, via a retro-aldol mechanism. The polypeptide is Serine hydroxymethyltransferase (Lachnoclostridium phytofermentans (strain ATCC 700394 / DSM 18823 / ISDg) (Clostridium phytofermentans)).